Reading from the N-terminus, the 234-residue chain is Sugar fermentation stimulation protein A (234 aa).

Positions L201 to S220 form a DNA-binding region, H-T-H motif.

Belongs to the SfsA family.

Binds to DNA non-specifically. Could be a regulatory factor involved in maltose metabolism. This Shigella dysenteriae serotype 1 (strain Sd197) protein is Sugar fermentation stimulation protein A.